The sequence spans 190 residues: Movement protein TGB3 (190 aa).

Topologically, residues 1–52 are cytoplasmic; it reads MDPPVILHSPNCSCQFCSSELPSTHTCGSQDRTVPLHVEATAAGHMEAKNFS. The chain crosses the membrane as a helical span at residues 53–73; sequence LQYVLLVAFVSVLLGFSFCVY. Topologically, residues 74–166 are lumenal; it reads LKSMSNDEAS…TPCENNVLLK (93 aa). Phosphotyrosine is present on residues tyrosine 89 and tyrosine 120. The Involved in plasmodesmata targeting and virus cell-to-cell movement signature appears at 89-93; sequence YQDLN. A helical membrane pass occupies residues 167-187; that stretch reads LWKDDLSFTIIAVTVLVGAML. Residues 188–190 lie on the Cytoplasmic side of the membrane; the sequence is ARC.

The protein belongs to the virgaviridae TGB3 movement protein family. Interacts with movement protein TGB2. TGB1-TGB3-TGB2 complex formation is enhanced by ATP hydrolysis.

The protein localises to the host cell junction. It is found in the host plasmodesma. Its subcellular location is the host endoplasmic reticulum membrane. The protein resides in the host cytoplasm. It localises to the host cytoskeleton. Participates in the transport of viral genome to neighboring plant cells directly through plasmodesmata, without any budding. TGBp2 and TGBp3 are necessary for intracellular delivery of TGBp1-containing vRNPs to plasmodesmata. Can gate plasmodesmata and increase their size exclusion limit. Induces host actin cytoskeleton network thickening, which probably plays a major role in virus cell-to-cell movement. This chain is Movement protein TGB3, found in Solanum nigrum (Black nightshade).